The following is a 232-amino-acid chain: Pseudaminic acid cytidylyltransferase (232 aa).

This sequence belongs to the CMP-NeuNAc synthase family. Mg(2+) serves as cofactor.

The enzyme catalyses pseudaminate + CTP = CMP-pseudaminate + diphosphate. Functionally, catalyzes the final step in the biosynthesis of pseudaminic acid, a sialic-acid-like sugar that is used to modify flagellin. Mediates the activation of pseudaminic acid with CMP by forming CMP-pseudaminic acid. The sequence is that of Pseudaminic acid cytidylyltransferase (pseF) from Campylobacter jejuni subsp. jejuni serotype O:2 (strain ATCC 700819 / NCTC 11168).